The sequence spans 461 residues: tRNA modification GTPase MnmE (461 aa).

Arg27, Glu89, and Arg128 together coordinate (6S)-5-formyl-5,6,7,8-tetrahydrofolate. The TrmE-type G domain occupies 224–382 (GLATAIVGRP…LENAIEKLFF (159 aa)). Position 234 (Asn234) interacts with K(+). GTP-binding positions include 234 to 239 (NVGKSS), 253 to 259 (TDIAGTT), and 278 to 281 (DTAG). Mg(2+) is bound at residue Ser238. 3 residues coordinate K(+): Thr253, Ile255, and Thr258. Thr259 lines the Mg(2+) pocket. Position 461 (Lys461) interacts with (6S)-5-formyl-5,6,7,8-tetrahydrofolate.

The protein belongs to the TRAFAC class TrmE-Era-EngA-EngB-Septin-like GTPase superfamily. TrmE GTPase family. Homodimer. Heterotetramer of two MnmE and two MnmG subunits. It depends on K(+) as a cofactor.

The protein localises to the cytoplasm. Exhibits a very high intrinsic GTPase hydrolysis rate. Involved in the addition of a carboxymethylaminomethyl (cmnm) group at the wobble position (U34) of certain tRNAs, forming tRNA-cmnm(5)s(2)U34. The chain is tRNA modification GTPase MnmE from Lactobacillus gasseri (strain ATCC 33323 / DSM 20243 / BCRC 14619 / CIP 102991 / JCM 1131 / KCTC 3163 / NCIMB 11718 / NCTC 13722 / AM63).